Reading from the N-terminus, the 247-residue chain is Capsid protein (247 aa).

Residues 3-20 (KRDAPWRLMAGTSKVSRS) carry the Bipartite nuclear localization signal motif. The short motif at 31-45 (KRDAWVNRPMYRKPR) is the Nuclear localization signal element. The Nuclear export signal motif lies at 92–113 (ITHRVGKRFCVKSVYILGKIWM). The Bipartite nuclear localization signal motif lies at 191 to 238 (RRFWKVNNNVVYNHQEAGKYENHTENALLLYMACTHASNPVYATLKIR).

Belongs to the geminiviridae capsid protein family. Homomultimer. Binds to single-stranded and double-stranded viral DNA. Interacts (via nuclear localization signals) with host importin alpha-1a.

It is found in the virion. The protein resides in the host nucleus. Functionally, encapsidates the viral DNA into characteristic twinned ('geminate') particles. Binds the genomic viral ssDNA and shuttles it into and out of the cell nucleus. The CP of bipartite geminiviruses is not required for cell-to-cell or systemic movement. This is Capsid protein from Solanum lycopersicum (Tomato).